The primary structure comprises 453 residues: Ribulose bisphosphate carboxylase large chain (453 aa).

A propeptide spanning residues 1-2 (MS) is cleaved from the precursor. N-acetylproline is present on proline 3. The residue at position 14 (lysine 14) is an N6,N6,N6-trimethyllysine. Residues asparagine 123 and threonine 173 each contribute to the substrate site. Lysine 175 acts as the Proton acceptor in catalysis. Lysine 177 serves as a coordination point for substrate. Mg(2+) is bound by residues lysine 201, aspartate 203, and glutamate 204. Lysine 201 carries the N6-carboxylysine modification. The active-site Proton acceptor is the histidine 294. The substrate site is built by arginine 295, histidine 327, and serine 379.

It belongs to the RuBisCO large chain family. Type I subfamily. In terms of assembly, heterohexadecamer of 8 large chains and 8 small chains; disulfide-linked. The disulfide link is formed within the large subunit homodimers. Mg(2+) is required as a cofactor. The disulfide bond which can form in the large chain dimeric partners within the hexadecamer appears to be associated with oxidative stress and protein turnover.

The protein resides in the plastid. It is found in the chloroplast. It carries out the reaction 2 (2R)-3-phosphoglycerate + 2 H(+) = D-ribulose 1,5-bisphosphate + CO2 + H2O. The catalysed reaction is D-ribulose 1,5-bisphosphate + O2 = 2-phosphoglycolate + (2R)-3-phosphoglycerate + 2 H(+). RuBisCO catalyzes two reactions: the carboxylation of D-ribulose 1,5-bisphosphate, the primary event in carbon dioxide fixation, as well as the oxidative fragmentation of the pentose substrate in the photorespiration process. Both reactions occur simultaneously and in competition at the same active site. The sequence is that of Ribulose bisphosphate carboxylase large chain from Galium corsicum.